Reading from the N-terminus, the 189-residue chain is Prostaglandin-H2 D-isomerase (189 aa).

Residues 1–24 (MATPSSLWLGLALLGTLGVLQTPA) form the signal peptide. Residue Gln-25 is modified to Pyrrolidone carboxylic acid. An N-linked (GlcNAc...) asparagine glycan is attached at Asn-49. Cys-63 functions as the Nucleophile in the catalytic mechanism. An N-linked (GlcNAc...) asparagine glycan is attached at Asn-76. A disulfide bridge links Cys-87 with Cys-184.

This sequence belongs to the calycin superfamily. Lipocalin family. As to quaternary structure, monomer. Abundant in the brain and CNS, where it is expressed in tissues of the blood-brain barrier and secreted into the cerebro-spinal fluid.

Its subcellular location is the rough endoplasmic reticulum. It is found in the nucleus membrane. It localises to the golgi apparatus. The protein localises to the cytoplasm. The protein resides in the perinuclear region. Its subcellular location is the secreted. The catalysed reaction is prostaglandin H2 = prostaglandin D2. In terms of biological role, catalyzes the conversion of PGH2 to PGD2, a prostaglandin involved in smooth muscle contraction/relaxation and a potent inhibitor of platelet aggregation. Involved in a variety of CNS functions, such as sedation, NREM sleep and PGE2-induced allodynia, and may have an anti-apoptotic role in oligodendrocytes. Binds small non-substrate lipophilic molecules, including biliverdin, bilirubin, retinal, retinoic acid and thyroid hormone, and may act as a scavenger for harmful hydrophobic molecules and as a secretory retinoid and thyroid hormone transporter. Possibly involved in development and maintenance of the blood-brain, blood-retina, blood-aqueous humor and blood-testis barrier. It is likely to play important roles in both maturation and maintenance of the central nervous system and male reproductive system. Involved in PLA2G3-dependent maturation of mast cells. PLA2G3 is secreted by immature mast cells and acts on nearby fibroblasts upstream to PTDGS to synthesize PGD2, which in turn promotes mast cell maturation and degranulation via PTGDR. In Sus scrofa (Pig), this protein is Prostaglandin-H2 D-isomerase (PTGDS).